The primary structure comprises 139 residues: Putative pre-16S rRNA nuclease (139 aa).

It belongs to the YqgF nuclease family.

The protein resides in the cytoplasm. Functionally, could be a nuclease involved in processing of the 5'-end of pre-16S rRNA. The protein is Putative pre-16S rRNA nuclease of Streptococcus suis (strain 98HAH33).